Consider the following 178-residue polypeptide: Tetratricopeptide repeat protein 9C (178 aa).

TPR repeat units follow at residues 15 to 48 (ASSF…LRSL), 79 to 114 (ADCY…QPEN), and 115 to 148 (VKAL…APKD).

It belongs to the TTC9 family.

The chain is Tetratricopeptide repeat protein 9C (ttc9c) from Xenopus tropicalis (Western clawed frog).